The sequence spans 196 residues: Nucleoid occlusion factor SlmA (196 aa).

The region spanning 7–68 (PNRRDEILQA…GLIEFIEESI (62 aa)) is the HTH tetR-type domain. The segment at residues 31-50 (TTAKLAKQVGVSEAALYRHF) is a DNA-binding region (H-T-H motif). Residues 71–93 (RVNRILEDEKDTLKRIELLLKLL) adopt a coiled-coil conformation.

It belongs to the nucleoid occlusion factor SlmA family. As to quaternary structure, homodimer. Interacts with FtsZ.

The protein resides in the cytoplasm. It is found in the nucleoid. Required for nucleoid occlusion (NO) phenomenon, which prevents Z-ring formation and cell division over the nucleoid. Acts as a DNA-associated cell division inhibitor that binds simultaneously chromosomal DNA and FtsZ, and disrupts the assembly of FtsZ polymers. SlmA-DNA-binding sequences (SBS) are dispersed on non-Ter regions of the chromosome, preventing FtsZ polymerization at these regions. The sequence is that of Nucleoid occlusion factor SlmA from Aliivibrio fischeri (strain MJ11) (Vibrio fischeri).